The sequence spans 146 residues: Hemoglobin subunit beta (146 aa).

Val-1 bears the N-acetylvaline mark. One can recognise a Globin domain in the interval 2-146 (HLTPEEKSAV…VANALAHKYH (145 aa)). Thr-12 carries the phosphothreonine modification. Position 44 is a phosphoserine (Ser-44). Lys-59 carries the N6-acetyllysine modification. His-63 lines the heme b pocket. Lys-82 is subject to N6-acetyllysine. His-92 serves as a coordination point for heme b. S-nitrosocysteine is present on Cys-93. The residue at position 144 (Lys-144) is an N6-acetyllysine.

The protein belongs to the globin family. As to quaternary structure, heterotetramer of two alpha chains and two beta chains. In terms of tissue distribution, red blood cells.

In terms of biological role, involved in oxygen transport from the lung to the various peripheral tissues. In Hylobates lar (Lar gibbon), this protein is Hemoglobin subunit beta (HBB).